A 188-amino-acid polypeptide reads, in one-letter code: Large ribosomal subunit protein eL18z (188 aa).

Belongs to the eukaryotic ribosomal protein eL18 family.

This is Large ribosomal subunit protein eL18z (RPL18A) from Arabidopsis thaliana (Mouse-ear cress).